Here is a 520-residue protein sequence, read N- to C-terminus: RNA-binding protein MEX3A (520 aa).

Positions 49–111 (GLGEPPAPTA…QPPTAPKGAS (63 aa)) are disordered. Over residues 60–69 (EDGGGGGGGA) the composition is skewed to gly residues. Positions 73 to 91 (PAAPPQPAPPPPPAAPPAA) are enriched in pro residues. KH domains lie at 132-193 (TTEC…RREI) and 223-284 (QVTI…REEI). The residue at position 338 (S338) is a Phosphoserine. The disordered stretch occupies residues 412–461 (SSSSAKARAGPPGAHRSPATSAGPELAGLPRRPPGEPLQGFSKLGGGGLR). S462 carries the post-translational modification Phosphoserine. An RING-type zinc finger spans residues 469 to 509 (CMVCFESEVTAALVPCGHNLFCMECAVRICERTDPECPVCH).

In terms of processing, phosphorylated. As to expression, highest levels found in fetal brain and testis. Detected also in thymus, salivary gland and uterus.

Its subcellular location is the cytoplasm. It localises to the nucleus. It is found in the P-body. Functionally, RNA binding protein, may be involved in post-transcriptional regulatory mechanisms. This chain is RNA-binding protein MEX3A (MEX3A), found in Homo sapiens (Human).